The following is a 264-amino-acid chain: MVKDRMVELLQEHFELNLYEARAYVALVGFGVLTPAELASVSEVPAPRTYDVLRSLEKKGFAISQPGKVNKYRPVHPENILEKFIEEWQERVKEELEAKKKAKEELIELMKPLIETEIPKYGVERVWVVRGIRNATLKTKEMFEEVKEKILLADDGYIAINLENDLIKAIDNGAKAKIIVSKSLLKRLEGSKIMEYAKKGKLELRALDKFELPMLICDDEVFFALEDMAARYFNYETQVWIKDFRVRDLFEAKFNEYWEKAEKV.

Residues 81 to 113 adopt a coiled-coil conformation; that stretch reads LEKFIEEWQERVKEELEAKKKAKEELIELMKPL.

It belongs to the transcriptional regulator TrmB family.

It localises to the cytoplasm. Its subcellular location is the chromosome. Its function is as follows. An abundant chromosomal protein that seems to be involved in both genome architecture and transcription repression. Incubation with DNA in vitro gives fibrous structures 14.2 +/- 2.1 nm in thickness (naked DNA is 1.83 +/- 0.37 nm); does not significantly compact DNA. Binds to both coding and non-coding regions; binding within gene promoters correlates with decreased transcript levels, while binding within coding regions does not. The polypeptide is DNA-binding HTH-type transcriptional repressor TrmBL2 (Thermococcus kodakarensis (strain ATCC BAA-918 / JCM 12380 / KOD1) (Pyrococcus kodakaraensis (strain KOD1))).